The sequence spans 561 residues: Dihydroxy-acid dehydratase (561 aa).

Cys50 is a [2Fe-2S] cluster binding site. A Mg(2+)-binding site is contributed by Asp82. Cys123 contributes to the [2Fe-2S] cluster binding site. Asp124 and Lys125 together coordinate Mg(2+). Lys125 is subject to N6-carboxylysine. Position 195 (Cys195) interacts with [2Fe-2S] cluster. Glu447 serves as a coordination point for Mg(2+). Ser473 functions as the Proton acceptor in the catalytic mechanism.

Belongs to the IlvD/Edd family. Homodimer. Requires [2Fe-2S] cluster as cofactor. Mg(2+) serves as cofactor.

It catalyses the reaction (2R)-2,3-dihydroxy-3-methylbutanoate = 3-methyl-2-oxobutanoate + H2O. The catalysed reaction is (2R,3R)-2,3-dihydroxy-3-methylpentanoate = (S)-3-methyl-2-oxopentanoate + H2O. It participates in amino-acid biosynthesis; L-isoleucine biosynthesis; L-isoleucine from 2-oxobutanoate: step 3/4. Its pathway is amino-acid biosynthesis; L-valine biosynthesis; L-valine from pyruvate: step 3/4. Its function is as follows. Functions in the biosynthesis of branched-chain amino acids. Catalyzes the dehydration of (2R,3R)-2,3-dihydroxy-3-methylpentanoate (2,3-dihydroxy-3-methylvalerate) into 2-oxo-3-methylpentanoate (2-oxo-3-methylvalerate) and of (2R)-2,3-dihydroxy-3-methylbutanoate (2,3-dihydroxyisovalerate) into 2-oxo-3-methylbutanoate (2-oxoisovalerate), the penultimate precursor to L-isoleucine and L-valine, respectively. This chain is Dihydroxy-acid dehydratase, found in Crocosphaera subtropica (strain ATCC 51142 / BH68) (Cyanothece sp. (strain ATCC 51142)).